The chain runs to 52 residues: ATP synthase F(0) complex subunit 8 (52 aa).

A helical membrane pass occupies residues 10–30 (LMTHLWAWLMLYLTTQKIKTF).

It belongs to the ATPase protein 8 family. As to quaternary structure, component of the ATP synthase complex composed at least of ATP5F1A/subunit alpha, ATP5F1B/subunit beta, ATP5MC1/subunit c (homooctomer), MT-ATP6/subunit a, MT-ATP8/subunit 8, ATP5ME/subunit e, ATP5MF/subunit f, ATP5MG/subunit g, ATP5MK/subunit k, ATP5MJ/subunit j, ATP5F1C/subunit gamma, ATP5F1D/subunit delta, ATP5F1E/subunit epsilon, ATP5PF/subunit F6, ATP5PB/subunit b, ATP5PD/subunit d, ATP5PO/subunit OSCP. ATP synthase complex consists of a soluble F(1) head domain (subunits alpha(3) and beta(3)) - the catalytic core - and a membrane F(0) domain - the membrane proton channel (subunits c, a, 8, e, f, g, k and j). These two domains are linked by a central stalk (subunits gamma, delta, and epsilon) rotating inside the F1 region and a stationary peripheral stalk (subunits F6, b, d, and OSCP).

Its subcellular location is the mitochondrion membrane. Its function is as follows. Subunit 8, of the mitochondrial membrane ATP synthase complex (F(1)F(0) ATP synthase or Complex V) that produces ATP from ADP in the presence of a proton gradient across the membrane which is generated by electron transport complexes of the respiratory chain. ATP synthase complex consist of a soluble F(1) head domain - the catalytic core - and a membrane F(1) domain - the membrane proton channel. These two domains are linked by a central stalk rotating inside the F(1) region and a stationary peripheral stalk. During catalysis, ATP synthesis in the catalytic domain of F(1) is coupled via a rotary mechanism of the central stalk subunits to proton translocation. In vivo, can only synthesize ATP although its ATP hydrolase activity can be activated artificially in vitro. Part of the complex F(0) domain. The chain is ATP synthase F(0) complex subunit 8 from Lycodon semicarinatus (Ryukyu odd-tooth snake).